The chain runs to 166 residues: Lipoprotein signal peptidase (166 aa).

4 helical membrane passes run 10–30, 46–66, 71–91, and 100–120; these read GGAL…DQLT, LTPF…GFLA, WQRW…CYLL, and FSLS…DRLI. Active-site residues include Asp126 and Asp144. A helical transmembrane segment spans residues 135 to 155; the sequence is WHWPAFNLADSAITVGAVLLI.

It belongs to the peptidase A8 family.

Its subcellular location is the cell inner membrane. It catalyses the reaction Release of signal peptides from bacterial membrane prolipoproteins. Hydrolyzes -Xaa-Yaa-Zaa-|-(S,diacylglyceryl)Cys-, in which Xaa is hydrophobic (preferably Leu), and Yaa (Ala or Ser) and Zaa (Gly or Ala) have small, neutral side chains.. It participates in protein modification; lipoprotein biosynthesis (signal peptide cleavage). Its function is as follows. This protein specifically catalyzes the removal of signal peptides from prolipoproteins. The sequence is that of Lipoprotein signal peptidase from Burkholderia thailandensis (strain ATCC 700388 / DSM 13276 / CCUG 48851 / CIP 106301 / E264).